We begin with the raw amino-acid sequence, 1705 residues long: MEMGSDGEDQKIRSVVGDANLNNKKKKIDNNSSSKDGRVKPKRQMKTPFQLETLEKVYSEEKYPSEATRAELSEKLDLSDRQLQMWFCHRRLKDKKDGQSNKPVKSSVAAVQSASVNELPAAAGSVPEQDSRSDSGSESGCSPYSNSRRNFASGSSSSRAELDEYETMGKPSYESRLSTMVHRAIVCIEAQLGEPLRDDGPILGMEFDPLPPGAFGTPIAMQKHLLHPYESDLYERHDPRPRRSHAAARSFHEQQSLDDPSSFTPNMYERYSENHARGMDYEVARSRISSFMHANGPVPRSYVTPGHASRNCSTSQQDMPSPIESAHHGDRFLLEKDSSVLGTEDPYLLPDGVRKSSDVHRKGKINDGRLGRGSETRENHGPKDLEKLEIQRKKNEERMRKEMERNERERRKEEERLMRERIKEEERLQREQRREVERREKFLQRENERAEKKKQKDEIRREKDAIRRKLAIEKATARRIAKESMDLIEDEQLELMELAAISKGLPSVLQLDHDTLQNLEVYRDSLSTFPPKSLQLKMPFAISPWKDSDETVGNLLMVWRFLISFSDVLDLWPFTLDEFIQAFHDYDSRLLGEIHVTLLRSIIRDVEDVARTPFSGIGNNQYTTANPEGGHPQIVEGAYAWGFDIRSWKKHLNPLTWPEILRQLALSAGFGPKLKKKHSRLTNTGDKDEAKGCEDVISTIRNGTAAESAFASMREKGLLAPRKSRHRLTPGTVKFAAFHVLSLEGSKGLTVLELADKIQKSGLRDLTTSKTPEASISVALTRDVKLFERIAPSTYCVRAPYVKDPKDGEAILADARKKIRAFENGFTGPEDVNDLERDEDFEIDIDEDPEVDDLATLASASKSAVLGEANVLSGKGVDTMFCDVKADVKSELEKEFSSPPPSTMKSIVPQHSERHKNTVVGGVDAVIDESNQGQSWIQGLTEGDYCHLSVEERLNALVALVGIANEGNSIRTGLEDRMEAANALKKQMWAEAQLDNSCMRDVLKLDLQNLASSKTESTIGLPIIQSSTRERDSFDRDPSQLLDETKPLEDLSNDLHKSSAERALINQDANISQENYASKRSRSQLKSYIGHKAEEVYPYRSLPLGQDRRHNRYWHFAVSVSKSDPCSRLLFVELHDGKWLLIDSEEAFDILVASLDMRGIRESHLRIMLQKIEGSFKENACKDIKLARNPFLTEKSVVNHSPTDSVSPSSSAISGSNSDSMETSTSIRVDLGRNDTENKNLSKRFHDFQRWMWTETYSSLPSCARKYGKKRSELLATCDACVASYLSEYTFCSSCHQRLDVVDSSEILDSGLAVSPLPFGVRLLKPLLVFLEASVPDEALESFWTEDQRKKWGFRLNTSSSPGELLQVLTSLESAIKKESLSSNFMSAKELLGAANAEADDQGSVDVLPWIPKTVSAVALRLSELDASIIYVKPEKPEVIPEDENEQISLFPRDSPFKGKGPREQEDQDEVAPNPGNRNKKRARVSLGSGSNRKVKRKKAQSGLNKFVVGRRNVAVNSNLMAVELNHQVPGKGKRTVRKRPERIDEDNSHLVNRMANIVRPKSEEVEEDEEEEEQTFRDINEDWAAGETPREMEEDWANETPNRMMTPMQVDDESDNSVGVESEDEDGGGQFVDYSQRNKWGLDWNSNLNVAIEEDEEEEVVGVGRVEGEDDAEMSESSEDDDVPANNAANNYDRESEGYSSSDS.

Disordered stretches follow at residues Met-1–Thr-53, Glu-118–Thr-167, His-237–Met-267, Gly-296–Pro-322, and Gly-352–Glu-414. Residues Val-39 to Gly-98 constitute a DNA-binding region (homeobox). Residues Gly-136–Arg-159 are compositionally biased toward low complexity. Polar residues-rich tracts occupy residues Glu-253 to Pro-265 and Arg-310 to Met-319. A DDT domain is found at Asp-549–Asp-608. Residues Gly-731–Pro-800 form the HTH HARE-type domain. Disordered stretches follow at residues Thr-1028–Asn-1053, Val-1198–Val-1229, Pro-1441–Ser-1502, Pro-1561–Tyr-1635, and Ala-1652–Ser-1705. Residues Ser-1201 to Ser-1220 are compositionally biased toward low complexity. A compositionally biased stretch (basic and acidic residues) spans Ser-1455–Gln-1465. Composition is skewed to acidic residues over residues Glu-1565–Glu-1574, Val-1611–Gly-1628, and Gly-1669–Val-1684.

In terms of assembly, interacts with CHR11 and CHR17. Interacts (via the DDT domain) with CHR11 (via C-terminus). As to expression, highly expressed in growing tissues such as inflorescence and flower meristems, young leaves and floral organs. Expressed in roots, rosette and cauline leaves, stems, flowers, inflorescences and siliques.

Its subcellular location is the nucleus. In terms of biological role, transcriptional regulator required for the maintenance of the plant vegetative phase. In association with CHR11 or CHR17 may prevent the early activation of the vegetative-to-reproductive transition by regulating key genes that contribute to flower timing, such as FT, SEP1, SEP3, AGL8/FUL, SOC1 and FLC. The sequence is that of Homeobox-DDT domain protein RLT1 from Arabidopsis thaliana (Mouse-ear cress).